Here is a 486-residue protein sequence, read N- to C-terminus: Elastin-binding protein EbpS (486 aa).

Residues 1–40 (MSNNFKDDFEKNRQSIDTNSHQDHTEDVEKDQSELEHQDT) show a composition bias toward basic and acidic residues. The segment at 1–314 (MSNNFKDDFE…HHDRDKERKK (314 aa)) is disordered. Topologically, residues 2-204 (SNNFKDDFEK…ESKDHHSGKK (203 aa)) are extracellular. Residues 14–34 (QSIDTNSHQDHTEDVEKDQSE) form an elastin-binding region. A compositionally biased stretch (polar residues) spans 64–85 (TNHNKQVHNESQTSEDNVQNEA). 3 stretches are compositionally biased toward basic and acidic residues: residues 103 to 117 (EPSHQDSTPQHEEGY), 126 to 160 (DKSHPEPIEDNDKHETIKEAENNTEHSTVSDKSEA), and 180 to 199 (SKDKHDDVTVKQDKDESKDH). Positions 204 to 225 (KGAAIGAGTAGVAGAAGAMGVS) are enriched in low complexity. A helical transmembrane segment spans residues 205–225 (GAAIGAGTAGVAGAAGAMGVS). The Cytoplasmic segment spans residues 226 to 319 (KAKKHSNDAQ…KERKKGGMAK (94 aa)). Polar residues predominate over residues 233 to 246 (DAQNKSNSGKVNNS). Positions 247-259 (TEDKASEDKSKEH) are enriched in basic and acidic residues. A compositionally biased stretch (low complexity) spans 278 to 297 (GAASNSASAASKPHASNNAS). Residues 300-314 (NDEHDHHDRDKERKK) show a composition bias toward basic and acidic residues. The helical transmembrane segment at 320–340 (VLLPLIAAVLIIGALAIFGGM) threads the bilayer. The Extracellular portion of the chain corresponds to 341–486 (ALNNHNNGTK…IRNGQQIVIP (146 aa)). Residues 351–440 (ENKIANTNKN…QRQGGGQRHT (90 aa)) form a disordered region. Basic and acidic residues predominate over residues 361–398 (NADESKDKDTSKDASKDKSKSTDSDKSKDDQDKATKDE). The segment covering 403 to 431 (QNNANQANNQAQNNQNQQQANQNQQQQQQ) has biased composition (low complexity). The LysM domain maps to 437–485 (QRHTVNGQENLYRIAIQYYGSGSPENVEKIRRANGLSGNNIRNGQQIVI).

The protein resides in the cell membrane. In terms of biological role, promotes binding of soluble elastin peptides and tropoelastin to S.aureus cells although it is not able to promote bacterial adherence to immobilized elastin and, therefore, is not a microbial surface component recognizing adhesive matrix molecule (MSCRAMM). This chain is Elastin-binding protein EbpS (ebpS), found in Staphylococcus aureus (strain MRSA252).